A 446-amino-acid chain; its full sequence is Baeyer-Villiger monooxygenase dmxR6 (446 aa).

The protein belongs to the AflY oxidoreductase family.

Its pathway is secondary metabolite biosynthesis. Baeyer-Villiger monooxygenase; part of the gene cluster that mediates the biosynthesis of the dimeric xanthones cryptosporioptides. The pathway begins with the synthesis of atrochrysone thioester by the polyketide synthase dmx-nrPKS. The atrochrysone carboxyl ACP thioesterase dmxR1 then breaks the thioester bond and releases the atrochrysone carboxylic acid from dmx-nrPKS. Atrochrysone carboxylic acid is decarboxylated by the decarboxylase dmxR15, and oxidized by the anthrone oxygenase dmxR16 to yield emodin. Emodin is then reduced to emodin hydroquinone by the oxidoreductase dmxR7. A-ring reduction by the short chain dehydrogenase dmxR18, dehydration by the scytalone dehydratase-like protein dmxR17 and probable spontaneous re-oxidation, results in overall deoxygenation to chrysophanol. Baeyer-Villiger oxidation by the Baeyer-Villiger monooxygenase (BVMO) dmxR6 then yields monodictylactone in equilibrium with monodictyphenone. In the case of the cryptosporioptides biosynthesis, monodictylactone is reduced at C-12 to an alcohol (by the short chain dehydrogenases dmxR12 or dmxR8) and hydroxylated at C-5 by dmxR9, yielding the electron-rich aromatic which could eliminate H(2)O to form the ortho-quinonemethide, followed by tautomerisation to paraquinone and complete the formal reduction to produce the 10-methylgroup. Conjugate addition of C-4a-OH to the resulting paraquinone by the monooxygenase dmxR10 then gives cyclohexadienone, which is then reduced at C-5 by the short chain dehydrogenase dmxR3 to give the dihydroxanthone. The 6,7-epoxide in the cryptosporioptides could be introduced by the cytochrome P450 monooxygenase dmxL3. The highly reducing PKS dmxL2 manufactures butyrate, which is further carboxylated by dmxL1 to form ethylmalonate. It is not yet clear whether the carboxylation occurs while the butyrate is attached to the ACP of dmxL2, but this unusual fungal metabolite could then be esterified to O-5 by the O-acetyltransferase dmxR13. Finally, dimerization performed by dmxR5 gives the observed dimers cryptosporioptides A, B and C as the final products of the pathway. The polypeptide is Baeyer-Villiger monooxygenase dmxR6 (Cryptosporiopsis sp. (strain 8999)).